A 596-amino-acid polypeptide reads, in one-letter code: Aspartic proteinase yapsin-7 (596 aa).

The N-terminal stretch at 1–25 (MTCLILWYLWLISTFQLEFATASTA) is a signal peptide. N-linked (GlcNAc...) asparagine glycosylation is found at asparagine 26 and asparagine 59. The Lumenal segment spans residues 26 to 575 (NTTTTAKSGT…SPYTFNKDPA (550 aa)). The Peptidase A1 domain occupies 56-440 (YYVNSTFGTP…DLEDNTIAIA (385 aa)). Aspartate 74 is a catalytic residue. N-linked (GlcNAc...) asparagine glycosylation is found at asparagine 106, asparagine 131, asparagine 140, asparagine 143, asparagine 148, asparagine 175, and asparagine 308. Aspartate 321 is a catalytic residue. Asparagine 391, asparagine 455, asparagine 478, asparagine 484, asparagine 549, and asparagine 552 each carry an N-linked (GlcNAc...) asparagine glycan. The helical transmembrane segment at 576–596 (GHVTRIASLLLLSIFSILIVL) threads the bilayer.

It belongs to the peptidase A1 family.

The protein localises to the cytoplasm. It is found in the endoplasmic reticulum membrane. This Saccharomyces cerevisiae (strain ATCC 204508 / S288c) (Baker's yeast) protein is Aspartic proteinase yapsin-7 (YPS7).